Reading from the N-terminus, the 590-residue chain is PWWP domain-containing protein 2B (590 aa).

Disordered regions lie at residues 52-110, 182-347, 360-398, and 426-467; these read APLP…PPLP, KSTL…EHEP, YLRDSSPAPCADGPAGGLADLSSGSSGEDDDFKSCPQGP, and DSLD…TVPP. A Phosphoserine modification is found at Ser-84. Residues 99-110 show a composition bias toward pro residues; sequence PEPPPPLVPPLP. Phosphoserine is present on residues Ser-186 and Ser-206. The segment covering 208–217 has biased composition (basic and acidic residues); that stretch reads PDRELRKPEE. Ser-250 is modified (phosphoserine). A compositionally biased stretch (basic and acidic residues) spans 296 to 305; the sequence is VLDRESRDRP. Over residues 376–385 the composition is skewed to low complexity; sequence GLADLSSGSS. Ser-447 carries the post-translational modification Phosphoserine. Residues 490 to 550 enclose the PWWP domain; sequence VGDIVWGKIH…ISKLSPFSEF (61 aa).

As to quaternary structure, component of a MTA1-specific subcomplex of the NuRD complex composed of PWWP2B, MTA1 and HDAC1 but does not contain CHD4 and MBD3. Interacts with MTA1 and HDAC1. Interacts with MTA2, MTA3, HDAC2, RBBP4, RBBP7, BRCC3 and ZNF516. Does not interact with CHD4 and MBD3. Deubiquitinated by BRCC3; leading to its stabilization.

Functionally, chromatin-binding protein that acts as an adapter between distinct nucleosome components (H3K36me3 or H2A.Z) and chromatin-modifying complexes, contributing to the regulation of the levels of histone acetylation at actively transcribed genes. Competes with CHD4 and MBD3 for interaction with MTA1 to form a NuRD subcomplex, preventing the formation of full NuRD complex (containing CHD4 and MBD3), leading to recruitment of HDACs to gene promoters resulting in turn in the deacetylation of nearby H3K27 and H2A.Z. Plays a role in facilitating transcriptional elongation through regulation of histone acetylation. Negatively regulates brown adipocyte thermogenesis by interacting with and stabilizing HDAC1 at the UCP1 gene promoter, thereby promoting histone deacetylation at the promoter leading to the repression of UCP1 expression. The chain is PWWP domain-containing protein 2B (PWWP2B) from Homo sapiens (Human).